The sequence spans 651 residues: UvrABC system protein C (651 aa).

Residues 20–97 (ERCGVYRMFD…IKKFQPKFNI (78 aa)) form the GIY-YIG domain. A UVR domain is found at 207 to 242 (KALQENLSKKMEELSSQMRFEEAAEIRDRIKALSYV).

The protein belongs to the UvrC family. Interacts with UvrB in an incision complex.

The protein localises to the cytoplasm. The UvrABC repair system catalyzes the recognition and processing of DNA lesions. UvrC both incises the 5' and 3' sides of the lesion. The N-terminal half is responsible for the 3' incision and the C-terminal half is responsible for the 5' incision. The sequence is that of UvrABC system protein C from Rickettsia akari (strain Hartford).